The primary structure comprises 346 residues: [LysW]-lysine/[LysW]-ornithine hydrolase (346 aa).

His68 provides a ligand contact to Zn(2+). The active site involves Asp70. Residue Asp92 coordinates Zn(2+). Catalysis depends on Glu122, which acts as the Proton acceptor. Zn(2+) is bound by residues Glu123, Glu146, and His317.

This sequence belongs to the peptidase M20A family. LysK subfamily. Zn(2+) is required as a cofactor. Co(2+) serves as cofactor.

The protein localises to the cytoplasm. The enzyme catalyses [amino-group carrier protein]-C-terminal-gamma-(L-lysyl)-L-glutamate + H2O = [amino-group carrier protein]-C-terminal-L-glutamate + L-lysine. The catalysed reaction is [amino-group carrier protein]-C-terminal-gamma-(L-ornithyl)-L-glutamate + H2O = [amino-group carrier protein]-C-terminal-L-glutamate + L-ornithine. It participates in amino-acid biosynthesis; L-lysine biosynthesis via AAA pathway; L-lysine from L-alpha-aminoadipate (Thermus route): step 5/5. It functions in the pathway amino-acid biosynthesis; L-arginine biosynthesis. In terms of biological role, catalyzes the release of L-lysine from [LysW]-gamma-L-lysine and the release of L-ornithine from [LysW]-L-ornithine. This chain is [LysW]-lysine/[LysW]-ornithine hydrolase, found in Saccharolobus solfataricus (strain ATCC 35092 / DSM 1617 / JCM 11322 / P2) (Sulfolobus solfataricus).